A 291-amino-acid chain; its full sequence is Phosphatidylglycerol--prolipoprotein diacylglyceryl transferase (291 aa).

Transmembrane regions (helical) follow at residues 24–44 (WYAL…RALL), 64–84 (FILW…VLFY), 100–120 (WNGG…VILF), and 125–145 (GLPI…GLFL). Arg-147 serves as a coordination point for a 1,2-diacyl-sn-glycero-3-phospho-(1'-sn-glycerol). 3 consecutive transmembrane segments (helical) span residues 187-207 (AALE…LGAL), 211-231 (GLVL…AEFF), and 247-267 (MGML…YAAW).

It belongs to the Lgt family.

The protein localises to the cell inner membrane. The enzyme catalyses L-cysteinyl-[prolipoprotein] + a 1,2-diacyl-sn-glycero-3-phospho-(1'-sn-glycerol) = an S-1,2-diacyl-sn-glyceryl-L-cysteinyl-[prolipoprotein] + sn-glycerol 1-phosphate + H(+). It participates in protein modification; lipoprotein biosynthesis (diacylglyceryl transfer). Catalyzes the transfer of the diacylglyceryl group from phosphatidylglycerol to the sulfhydryl group of the N-terminal cysteine of a prolipoprotein, the first step in the formation of mature lipoproteins. This is Phosphatidylglycerol--prolipoprotein diacylglyceryl transferase from Nitrobacter winogradskyi (strain ATCC 25391 / DSM 10237 / CIP 104748 / NCIMB 11846 / Nb-255).